The sequence spans 213 residues: Small ribosomal subunit protein eS1 (213 aa).

The protein belongs to the eukaryotic ribosomal protein eS1 family.

This is Small ribosomal subunit protein eS1 from Desulfurococcus amylolyticus (strain DSM 18924 / JCM 16383 / VKM B-2413 / 1221n) (Desulfurococcus kamchatkensis).